Consider the following 523-residue polypeptide: uncharacterized protein (523 aa).

A Radical SAM core domain is found at 193-447; the sequence is RKCSGCGNCR…ALKRRMIGKR (255 aa). Positions 212, 220, and 223 each coordinate [4Fe-4S] cluster.

Requires [4Fe-4S] cluster as cofactor.

This is an uncharacterized protein from Methanopyrus kandleri (strain AV19 / DSM 6324 / JCM 9639 / NBRC 100938).